A 494-amino-acid polypeptide reads, in one-letter code: Bifunctional pantoate ligase/cytidylate kinase (494 aa).

The pantoate--beta-alanine ligase stretch occupies residues M1 to A258. M7–H14 provides a ligand contact to ATP. H14 acts as the Proton donor in catalysis. Q41 is a binding site for (R)-pantoate. Residue Q41 participates in beta-alanine binding. G130–D133 is an ATP binding site. Q136 is a (R)-pantoate binding site. Residues V159 and S167–R170 each bind ATP. The tract at residues F259–V494 is cytidylate kinase.

It in the N-terminal section; belongs to the pantothenate synthetase family. This sequence in the C-terminal section; belongs to the cytidylate kinase family. Type 1 subfamily.

The protein localises to the cytoplasm. It carries out the reaction (R)-pantoate + beta-alanine + ATP = (R)-pantothenate + AMP + diphosphate + H(+). It catalyses the reaction CMP + ATP = CDP + ADP. The catalysed reaction is dCMP + ATP = dCDP + ADP. It functions in the pathway cofactor biosynthesis; (R)-pantothenate biosynthesis; (R)-pantothenate from (R)-pantoate and beta-alanine: step 1/1. Its function is as follows. Catalyzes the condensation of pantoate with beta-alanine in an ATP-dependent reaction via a pantoyl-adenylate intermediate. Catalyzes the transfer of a phosphate group from ATP to either CMP or dCMP to form CDP or dCDP and ADP, respectively. The polypeptide is Bifunctional pantoate ligase/cytidylate kinase (Synechococcus sp. (strain CC9311)).